The following is a 109-amino-acid chain: uncharacterized protein (109 aa).

This is an uncharacterized protein from Mycoplasma genitalium (strain ATCC 33530 / DSM 19775 / NCTC 10195 / G37) (Mycoplasmoides genitalium).